Consider the following 377-residue polypeptide: Stimulator of interferon genes protein (377 aa).

Over 1–21 the chain is Cytoplasmic; it reads MRRAEENNGFGTIPKRRNQHT. The helical transmembrane segment at 22 to 42 threads the bilayer; that stretch reads PFYASIGMIVVIIVAFTSYHI. The Extracellular portion of the chain corresponds to 43–57; it reads TSYGDDRNRAMRQYS. A helical membrane pass occupies residues 58 to 80; that stretch reads FTFSLAYLAFLVGELLRRCCLFA. The Cytoplasmic portion of the chain corresponds to 81-101; the sequence is EEYRHIETRYNGSLKKAIQTT. A helical transmembrane segment spans residues 102 to 122; the sequence is FSFGHNNVLFVASLLFFVVFV. Over 123–154 the chain is Extracellular; sequence ASNDPNGSSSVIQGNSTAEPHTEMRQTSGWQG. A helical transmembrane segment spans residues 155–175; the sequence is LWGQFIISALLTPLVVHLLGL. Topologically, residues 176–377 are cytoplasmic; that stretch reads RELSKVEESQ…LKDSELEIGG (202 aa). Residues Tyr206, Arg272, 278–279, and Thr303 each bind 2',3'-cGAMP; that span reads RH. 3',3'-c-di-GMP-binding positions include Tyr206, Arg272, Arg278, and 300-303; that span reads EYAT.

Belongs to the TMEM173 family. As to quaternary structure, homodimer.

It is found in the endoplasmic reticulum membrane. Its function is as follows. Sensor of cytosolic DNA from bacteria and viruses that promotes autophagy. Acts by recognizing and binding cyclic GMP-AMP (cGAMP), a messenger produced by CGAS in response to DNA in the cytosol. Following cGAMP-binding, promotes the formation of autophagosomes, leading to target cytosolic DNA for degradation by the lysosome. Exhibits guanine base-specific ligand recognition. Binds 3'-3'linked cGAMP, 2'-3' linked cGAMP and 3'-3' linked c-di-GMP with much greater affinity as compared to 3'-3' linked c-di-AMP. Lacks the C-terminal tail (CTT) found in mammalian orthologs which is essential for interferon signaling. The protein is Stimulator of interferon genes protein of Nematostella vectensis (Starlet sea anemone).